The primary structure comprises 505 residues: Alpha-1-syntrophin (505 aa).

The disordered stretch occupies residues Met1 to Leu77. PH domains follow at residues Arg6–Asn269 and Asp293–His401. The PDZ domain occupies Arg87 to Lys170. Phosphoserine occurs at positions 101, 184, 189, 193, and 200. Positions Ala180–Asp211 are disordered. Residues Pro449–Ala505 form the SU domain. The segment at Pro483–Ala505 is calmodulin-binding.

Belongs to the syntrophin family. In terms of assembly, monomer and homodimer. Interacts with the dystrophin related protein DTNA; SGCG of the dystrophin glycoprotein complex; NOS1; GRB2; GA; TGFA; MAPK12 and the sodium channel proteins SCN4A and SCN5A. Interacts with the dystrophin protein DMD in a calmodulin dependent manner and with related protein UTRN; SGCA of the dystrophin glycoprotein complex; F-actin; calmodulin and with the other members of the syntrophin family SNTB1 and SNTB2. Interacts with MYOC; regulates muscle hypertrophy. Interacts with DTNB. Phosphorylated by CaM-kinase II. Phosphorylation may inhibit the interaction with DMD.

The protein resides in the cell membrane. The protein localises to the sarcolemma. It localises to the cell junction. Its subcellular location is the cytoplasm. It is found in the cytoskeleton. In terms of biological role, adapter protein that binds to and probably organizes the subcellular localization of a variety of membrane proteins. May link various receptors to the actin cytoskeleton and the extracellular matrix via the dystrophin glycoprotein complex. Plays an important role in synapse formation and in the organization of UTRN and acetylcholine receptors at the neuromuscular synapse. Binds to phosphatidylinositol 4,5-bisphosphate. The chain is Alpha-1-syntrophin (SNTA1) from Bos taurus (Bovine).